The primary structure comprises 122 residues: Basic phospholipase A2 homolog (122 aa).

Disulfide bonds link cysteine 26-cysteine 116, cysteine 28-cysteine 44, cysteine 43-cysteine 96, cysteine 49-cysteine 122, cysteine 50-cysteine 89, cysteine 57-cysteine 82, and cysteine 75-cysteine 87. The interval 106–117 (KKHRVTVKFLCK) is important for membrane-damaging activities in eukaryotes and bacteria; heparin-binding.

It belongs to the phospholipase A2 family. Group II subfamily. K49 sub-subfamily. As to quaternary structure, homodimer; non-covalently linked. Expressed by the venom gland.

It localises to the secreted. Snake venom phospholipase A2 (PLA2) that has almost no phospholipase A2 activity. Is myotoxic. Displays edema-inducing activities. A model of myotoxic mechanism has been proposed: an apo Lys49-PLA2 is activated by the entrance of a hydrophobic molecule (e.g. fatty acid) at the hydrophobic channel of the protein leading to a reorientation of a monomer. This reorientation causes a transition between 'inactive' to 'active' states, causing alignment of C-terminal and membrane-docking sites (MDoS) side-by-side and putting the membrane-disruption sites (MDiS) in the same plane, exposed to solvent and in a symmetric position for both monomers. The MDoS region stabilizes the toxin on membrane by the interaction of charged residues with phospholipid head groups. Subsequently, the MDiS region destabilizes the membrane with penetration of hydrophobic residues. This insertion causes a disorganization of the membrane, allowing an uncontrolled influx of ions (i.e. calcium and sodium), and eventually triggering irreversible intracellular alterations and cell death. The polypeptide is Basic phospholipase A2 homolog (Protobothrops mucrosquamatus (Taiwan habu)).